Consider the following 230-residue polypeptide: Sodium channel modifier 1 (230 aa).

S2 bears the Phosphoserine mark. The Bipartite nuclear localization signal motif lies at 4–20; that stretch reads KREGDDWSQLNVLKKRR. Residues 42-74 form a Matrin-type zinc finger; sequence FACAICPHRPVLDTLAMLTAHRAGKKHLSSLQL. K67 participates in a covalent cross-link: Glycyl lysine isopeptide (Lys-Gly) (interchain with G-Cter in SUMO2). Disordered regions lie at residues 76–106 and 129–191; these read YGKK…EAPL and RRKY…RALD. Basic and acidic residues predominate over residues 89–100; sequence PRQHNELRREET. The segment covering 142–151 has biased composition (pro residues); sequence SRPPLPPPEV. The span at 167 to 180 shows a compositional bias: polar residues; it reads GSQTKESATVSSPA. Phosphoserine is present on residues S183 and S219. Positions 188–230 are required for interaction with LUC7L2; sequence RALDHYLTLRSSGWIPDGRGRWIKDENVEFDSDEEEPPDLPLD.

Component of the minor spliceosome. Within this complex, interacts with RNF113A, as well as with SF3B1/SF3b155, SF3B2/SF3b145, SF3B3/SF3b130 and CDC5L. May interact with LUC7L2 and SNRNP70.

Its subcellular location is the nucleus. The protein localises to the nucleoplasm. It localises to the nucleus speckle. In terms of biological role, as a component of the minor spliceosome, involved in the splicing of U12-type introns in pre-mRNAs. Plays a role in the regulation of primary cilia length and Hedgehog signaling. This Bos taurus (Bovine) protein is Sodium channel modifier 1 (SCNM1).